The primary structure comprises 349 residues: Protein RecA (349 aa).

65–72 (GPESSGKT) provides a ligand contact to ATP.

Belongs to the RecA family.

The protein resides in the cytoplasm. Can catalyze the hydrolysis of ATP in the presence of single-stranded DNA, the ATP-dependent uptake of single-stranded DNA by duplex DNA, and the ATP-dependent hybridization of homologous single-stranded DNAs. It interacts with LexA causing its activation and leading to its autocatalytic cleavage. The sequence is that of Protein RecA from Aliarcobacter butzleri (strain RM4018) (Arcobacter butzleri).